The following is a 547-amino-acid chain: ATP synthase subunit alpha (547 aa).

172–179 (GDRKTGKT) provides a ligand contact to ATP.

It belongs to the ATPase alpha/beta chains family. In terms of assembly, F-type ATPases have 2 components, CF(1) - the catalytic core - and CF(0) - the membrane proton channel. CF(1) has five subunits: alpha(3), beta(3), gamma(1), delta(1), epsilon(1). CF(0) has three main subunits: a(1), b(2) and c(9-12). The alpha and beta chains form an alternating ring which encloses part of the gamma chain. CF(1) is attached to CF(0) by a central stalk formed by the gamma and epsilon chains, while a peripheral stalk is formed by the delta and b chains.

It is found in the cell membrane. It catalyses the reaction ATP + H2O + 4 H(+)(in) = ADP + phosphate + 5 H(+)(out). Produces ATP from ADP in the presence of a proton gradient across the membrane. The alpha chain is a regulatory subunit. This Rhodococcus erythropolis (strain PR4 / NBRC 100887) protein is ATP synthase subunit alpha.